The primary structure comprises 154 residues: Large ribosomal subunit protein uL13 (154 aa).

The protein belongs to the universal ribosomal protein uL13 family. Part of the 50S ribosomal subunit.

Functionally, this protein is one of the early assembly proteins of the 50S ribosomal subunit, although it is not seen to bind rRNA by itself. It is important during the early stages of 50S assembly. This Rhizobium etli (strain ATCC 51251 / DSM 11541 / JCM 21823 / NBRC 15573 / CFN 42) protein is Large ribosomal subunit protein uL13.